Here is a 410-residue protein sequence, read N- to C-terminus: O-methyltransferase afvC (410 aa).

S-adenosyl-L-methionine contacts are provided by residues 253-254, Asp-278, 299-300, and Arg-315; these read GG and DF. Residue His-319 is the Proton acceptor of the active site.

Belongs to the class I-like SAM-binding methyltransferase superfamily. Cation-independent O-methyltransferase family. COMT subfamily.

It participates in secondary metabolite biosynthesis. O-methyltransferase; part of the gene cluster that mediates the biosynthesis of aflavarin, a bicoumarin that exhibits anti-insectan activity against the fungivorous beetle C.hemipterus. In Aspergillus flavus (strain ATCC 200026 / FGSC A1120 / IAM 13836 / NRRL 3357 / JCM 12722 / SRRC 167), this protein is O-methyltransferase afvC.